Here is a 185-residue protein sequence, read N- to C-terminus: Tetratricopeptide repeat protein 36 homolog (185 aa).

3 TPR repeats span residues Ser53 to Ala86, Val88 to Gln119, and Cys125 to Phe158.

The protein belongs to the TTC36 family.

This is Tetratricopeptide repeat protein 36 homolog from Drosophila melanogaster (Fruit fly).